A 367-amino-acid chain; its full sequence is Probable dual-specificity RNA methyltransferase RlmN (367 aa).

Glutamate 92 acts as the Proton acceptor in catalysis. The Radical SAM core domain maps to 98 to 326 (QEYGLSVCVT…YDTLKKNGIN (229 aa)). An intrachain disulfide couples cysteine 105 to cysteine 341. [4Fe-4S] cluster is bound by residues cysteine 112, cysteine 116, and cysteine 119. S-adenosyl-L-methionine is bound by residues 164–165 (GE), serine 196, 219–221 (SLH), and asparagine 297. The active-site S-methylcysteine intermediate is the cysteine 341.

The protein belongs to the radical SAM superfamily. RlmN family. Requires [4Fe-4S] cluster as cofactor.

Its subcellular location is the cytoplasm. It carries out the reaction adenosine(2503) in 23S rRNA + 2 reduced [2Fe-2S]-[ferredoxin] + 2 S-adenosyl-L-methionine = 2-methyladenosine(2503) in 23S rRNA + 5'-deoxyadenosine + L-methionine + 2 oxidized [2Fe-2S]-[ferredoxin] + S-adenosyl-L-homocysteine. The catalysed reaction is adenosine(37) in tRNA + 2 reduced [2Fe-2S]-[ferredoxin] + 2 S-adenosyl-L-methionine = 2-methyladenosine(37) in tRNA + 5'-deoxyadenosine + L-methionine + 2 oxidized [2Fe-2S]-[ferredoxin] + S-adenosyl-L-homocysteine. Functionally, specifically methylates position 2 of adenine 2503 in 23S rRNA and position 2 of adenine 37 in tRNAs. This Listeria innocua serovar 6a (strain ATCC BAA-680 / CLIP 11262) protein is Probable dual-specificity RNA methyltransferase RlmN.